The sequence spans 213 residues: Large ribosomal subunit protein uL3 (213 aa).

The interval Lys-130–Arg-161 is disordered.

Belongs to the universal ribosomal protein uL3 family. Part of the 50S ribosomal subunit. Forms a cluster with proteins L14 and L19.

Functionally, one of the primary rRNA binding proteins, it binds directly near the 3'-end of the 23S rRNA, where it nucleates assembly of the 50S subunit. This chain is Large ribosomal subunit protein uL3, found in Picosynechococcus sp. (strain ATCC 27264 / PCC 7002 / PR-6) (Agmenellum quadruplicatum).